Reading from the N-terminus, the 463-residue chain is Glutamate--tRNA ligase 2 (463 aa).

Residues 10–20 (PSPTGFLHIGS) carry the 'HIGH' region motif. Residues 239 to 243 (KLSKR) carry the 'KMSKS' region motif. K242 provides a ligand contact to ATP.

The protein belongs to the class-I aminoacyl-tRNA synthetase family. Glutamate--tRNA ligase type 1 subfamily. As to quaternary structure, monomer.

It localises to the cytoplasm. It catalyses the reaction tRNA(Glu) + L-glutamate + ATP = L-glutamyl-tRNA(Glu) + AMP + diphosphate. Functionally, catalyzes the attachment of glutamate to tRNA(Glu) in a two-step reaction: glutamate is first activated by ATP to form Glu-AMP and then transferred to the acceptor end of tRNA(Glu). This chain is Glutamate--tRNA ligase 2, found in Rickettsia akari (strain Hartford).